A 470-amino-acid chain; its full sequence is Suppressor of SWI4 1 homolog (470 aa).

The Brix domain maps to 29–292 (PHSFVFTRGR…LIKIQEGVGN (264 aa)). S238 and S240 each carry phosphoserine. 2 disordered regions span residues 240–264 (SEVE…GNMQ) and 323–470 (AQRQ…RRRN). Positions 342–355 (AHKKKSLAGIKRAR) are enriched in basic residues. The residue at position 362 (S362) is a Phosphoserine. Position 441 is an N6-acetyllysine (K441). A compositionally biased stretch (basic residues) spans 447-457 (QRGKAKPRPRA).

It localises to the nucleus. The protein localises to the nucleolus. In terms of biological role, may have a role in cell growth. This Mus musculus (Mouse) protein is Suppressor of SWI4 1 homolog (Ppan).